We begin with the raw amino-acid sequence, 87 residues long: Neurotoxin LmNaTx64.1 (87 aa).

An N-terminal signal peptide occupies residues 1-18 (MKILFLIILTAFFIGVHC). The 67-residue stretch at 19–85 (KHGYPIIRAG…TWSRATNKCK (67 aa)) folds into the LCN-type CS-alpha/beta domain. Cystine bridges form between C33–C84, C37–C58, C44–C65, and C48–C67. Cysteine amide is present on C84.

Belongs to the long (4 C-C) scorpion toxin superfamily. Sodium channel inhibitor family. Beta subfamily. Expressed by the venom gland.

It localises to the secreted. Functionally, binds voltage-independently at site-4 of sodium channels (Nav) and shift the voltage of activation toward more negative potentials thereby affecting sodium channel activation and promoting spontaneous and repetitive firing. The protein is Neurotoxin LmNaTx64.1 of Lychas mucronatus (Chinese swimming scorpion).